A 1032-amino-acid polypeptide reads, in one-letter code: uncharacterized protein (1032 aa).

Disordered stretches follow at residues 54-80 (NNNN…NNNN), 391-451 (QLQI…QTHL), and 884-934 (INNE…SKVK). Residues 884–907 (INNENNNENNNNYNGNINSNNNNN) are compositionally biased toward low complexity.

This is an uncharacterized protein from Dictyostelium discoideum (Social amoeba).